Consider the following 98-residue polypeptide: mRNA interferase toxin MqsR (98 aa).

As to quaternary structure, might be a dimer. Also reported to be a monomer. Crystallizes as a heterotetramer with MqsA, MqsR-MqsA(2)-MqsR. Purifies as a possible heterohexamer of 2 MqsR dimers and 1 MqsA dimer. When the 2 dissociate the MsqR mRNA interferase becomes active.

In terms of biological role, toxic component of a type II toxin-antitoxin (TA) system. Plays a significant role in the control of biofilm formation and induction of persister cells in the presence of antibiotics. An mRNA interferase which has been reported to be translation-independent. It has also been reported to be translation-dependent. Cleavage has been reported to occur on either side of G in the sequence GCU. Also reported to cleave after C in GC(A/U) sequences. There are only 14 genes in E.coli W3110 (and probably also MG1655) that do not have a GCU sequence and thus are resistant to the mRNA interferase activity; among these is the gene for toxin GhoT. Overexpression of MqsR causes cessation of cell growth and inhibits cell proliferation via inhibition of translation as well as increasing persister cell formation; these effects are overcome by concomitant or subsequent expression of antitoxin MqsA. Cross-talk can occur between different TA systems. Ectopic expression of this toxin induces transcription of the relBEF TA system operon with specific cleavage of the relBEF mRNA produced. Regulates the expression of GhoT/GhoS, a type V TA system. Persistence depends on toxin GhoT activity, which MqsR controls at the post-transcriptional level by selectively degrading the antitoxin ghoS segment of the ghoST mRNA. Overexpression leads to a dramatic increase in tolerance to the antibiotic ofloxacin. This TA system mediates cell growth during bile acid deoxycholate stress by degrading mRNA for probable deoxycholate-binding protein YgiS; bile acid detergents such as deoxycholate are important for host defense against bacterial growth in the gall bladder and duodenum. Initially reported to act as a cotranscription factor with MqsA. Following further experiments, the MqsR-MqsA complex does not bind DNA and all reported data are actually due to a small fraction of free MqsA alone binding DNA. Addition of MqsR to a preformed MqsA-promoter DNA complex causes dissociation of the MqsA-DNA complex, probably causing derepression of MqsA-repressed transcripts. Does not bind DNA in the presence or absence of MqsA. This chain is mRNA interferase toxin MqsR, found in Escherichia coli (strain K12).